We begin with the raw amino-acid sequence, 728 residues long: 1,4-alpha-glucan branching enzyme GlgB (728 aa).

D405 serves as the catalytic Nucleophile. E458 serves as the catalytic Proton donor.

The protein belongs to the glycosyl hydrolase 13 family. GlgB subfamily. In terms of assembly, monomer.

It carries out the reaction Transfers a segment of a (1-&gt;4)-alpha-D-glucan chain to a primary hydroxy group in a similar glucan chain.. The protein operates within glycan biosynthesis; glycogen biosynthesis. Its function is as follows. Catalyzes the formation of the alpha-1,6-glucosidic linkages in glycogen by scission of a 1,4-alpha-linked oligosaccharide from growing alpha-1,4-glucan chains and the subsequent attachment of the oligosaccharide to the alpha-1,6 position. The sequence is that of 1,4-alpha-glucan branching enzyme GlgB from Salmonella arizonae (strain ATCC BAA-731 / CDC346-86 / RSK2980).